The chain runs to 533 residues: Protein disulfide isomerase-like 1-5 (533 aa).

A signal peptide spans 1 to 22; it reads MRARRVVAAAAVLLLFAVVAVA. Thioredoxin domains follow at residues 51–196 and 387–516; these read LGGG…KDQT and LLEG…EKLQ. The Nucleophile role is filled by Cys97. A glycan (N-linked (GlcNAc...) asparagine) is linked at Asn151. Active-site nucleophile residues include Cys436 and Cys439. Cys436 and Cys439 are disulfide-bonded. A Prevents secretion from ER motif is present at residues 530–533; that stretch reads KDEL.

It belongs to the protein disulfide isomerase family.

The protein localises to the endoplasmic reticulum lumen. The catalysed reaction is Catalyzes the rearrangement of -S-S- bonds in proteins.. Acts as a protein-folding catalyst that interacts with nascent polypeptides to catalyze the formation, isomerization, and reduction or oxidation of disulfide bonds. May play a role in storage protein biogenesis. This Oryza sativa subsp. japonica (Rice) protein is Protein disulfide isomerase-like 1-5 (PDIL1-5).